Reading from the N-terminus, the 406-residue chain is Purine nucleoside permease (406 aa).

The signal sequence occupies residues 1–22; it reads MKLSTLFTLATTISTLTTFTIA.

It belongs to the NUP family. In terms of processing, predicted to be a substrate for cleavage by KEX2.

Its activity is regulated as follows. Mammalian nucleoside transport inhibitors dipyridamole and NBMPR inhibit adenosine transport by NUP. Functionally, nucleoside permease that transports adenosine and guanosine. Does not show any transport activities towards cytidine, adenine, guanine, uridine, and uracil. This chain is Purine nucleoside permease, found in Candida albicans (strain SC5314 / ATCC MYA-2876) (Yeast).